Here is a 697-residue protein sequence, read N- to C-terminus: Long-chain-fatty-acid--CoA ligase 6 (697 aa).

A helical; Signal-anchor for type III membrane protein transmembrane segment spans residues 25 to 45 (LSATTLVSMGALAAILAYWFT). Residues 46–697 (HRPKALQPPC…QIEELYSISM (652 aa)) lie on the Cytoplasmic side of the membrane.

Belongs to the ATP-dependent AMP-binding enzyme family. Mg(2+) serves as cofactor. As to expression, expressed predominantly in erythrocyte precursors, in particular in reticulocytes, fetal blood cells derived from fetal liver, hemopoietic stem cells from cord blood, bone marrow and brain.

It localises to the mitochondrion outer membrane. Its subcellular location is the peroxisome membrane. It is found in the microsome membrane. The protein localises to the endoplasmic reticulum membrane. The catalysed reaction is a long-chain fatty acid + ATP + CoA = a long-chain fatty acyl-CoA + AMP + diphosphate. It catalyses the reaction (5Z,8Z,11Z,14Z)-eicosatetraenoate + ATP + CoA = (5Z,8Z,11Z,14Z)-eicosatetraenoyl-CoA + AMP + diphosphate. It carries out the reaction hexadecanoate + ATP + CoA = hexadecanoyl-CoA + AMP + diphosphate. The enzyme catalyses (E)-hexadec-2-enoate + ATP + CoA = (2E)-hexadecenoyl-CoA + AMP + diphosphate. The catalysed reaction is 15-hydroxy-(5Z,8Z,11Z,13E)-eicosatetraenoate + ATP + CoA = 15-hydroxy-(5Z,8Z,11Z,13E)-eicosatetraenoyl-CoA + AMP + diphosphate. It catalyses the reaction 12-hydroxy-(5Z,8Z,10E,14Z)-eicosatetraenoate + ATP + CoA = 12-hydroxy-(5Z,8Z,10E,14Z)-eicosatetraenoyl-CoA + AMP + diphosphate. It carries out the reaction 5-hydroxy-(6E,8Z,11Z,14Z)-eicosatetraenoate + ATP + CoA = 5-hydroxy-(6E,8Z,11Z,14Z)-eicosatetraenoyl-CoA + AMP + diphosphate. Catalyzes the conversion of long-chain fatty acids to their active form acyl-CoA for both synthesis of cellular lipids, and degradation via beta-oxidation. Plays an important role in fatty acid metabolism in brain and the acyl-CoAs produced may be utilized exclusively for the synthesis of the brain lipid. The protein is Long-chain-fatty-acid--CoA ligase 6 of Homo sapiens (Human).